The primary structure comprises 1131 residues: Tyrosine-protein kinase JAK2 (1131 aa).

Positions 1 to 239 are interaction with cytokine/interferon/growth hormone receptors; the sequence is MGMACLTMTE…RYRFRRFIEQ (239 aa). The FERM domain occupies 37-380; the sequence is PVLQVYLYHS…GYYRLTADAH (344 aa). Tyrosine 119 bears the Phosphotyrosine; by autocatalysis mark. Residues tyrosine 372 and tyrosine 373 each carry the phosphotyrosine modification. The region spanning 401 to 482 is the SH2; atypical domain; sequence HGPISMDFAI…NLKDLLNCYQ (82 aa). Phosphoserine is present on serine 523. Residues 545 to 809 form the Protein kinase 1 domain; sequence LIFNESLGQG…AIIRDLNSLF (265 aa). Tyrosine 570 and tyrosine 813 each carry phosphotyrosine. In terms of domain architecture, Protein kinase 2 spans 849-1126; the sequence is LKFLQQLGKG…RDLALRVDQI (278 aa). 855–863 is a binding site for ATP; the sequence is LGKGNFGSV. Tyrosine 868 is modified (phosphotyrosine; by autocatalysis). Residue lysine 882 coordinates ATP. 2 positions are modified to phosphotyrosine; by autocatalysis: tyrosine 966 and tyrosine 972. The active-site Proton acceptor is aspartate 976. 2 positions are modified to phosphotyrosine; by autocatalysis: tyrosine 1007 and tyrosine 1008.

This sequence belongs to the protein kinase superfamily. Tyr protein kinase family. JAK subfamily. In terms of assembly, interacts with IL23R, SKB1 and STAM2. Interacts with EPOR. Interacts with LYN. Interacts with SIRPA. Interacts with SH2B1. Interacts with TEC. Interacts with IFNGR2 (via intracellular domain). Interacts with LEPR (Isoform B). Interacts with HSP90AB1; promotes functional activation in a heat shock-dependent manner. Interacts with STRA6. Interacts with ASB2; the interaction targets JAK2 for Notch-induced proteasomal degradation. Mg(2+) serves as cofactor. Autophosphorylated, leading to regulate its activity. Leptin promotes phosphorylation on tyrosine residues, including phosphorylation on Tyr-813. Autophosphorylation on Tyr-119 in response to EPO down-regulates its kinase activity. Autophosphorylation on Tyr-868, Tyr-966 and Tyr-972 in response to growth hormone (GH) are required for maximal kinase activity. Also phosphorylated by TEC. Phosphorylated on tyrosine residues in response to interferon gamma signaling. Phosphorylated on tyrosine residues in response to a signaling cascade that is activated by increased cellular retinol. In terms of processing, undergoes Notch-induced ubiquitination and subsequent proteasomal degradation which is mediated by ASB1 or ASB2, the substrate-recognition components of probable ECS E3 ubiquitin-protein ligase complexes.

It is found in the endomembrane system. The protein localises to the cytoplasm. The protein resides in the nucleus. The catalysed reaction is L-tyrosyl-[protein] + ATP = O-phospho-L-tyrosyl-[protein] + ADP + H(+). With respect to regulation, regulated by autophosphorylation, can both activate or decrease activity. Heme regulates its activity by enhancing the phosphorylation on Tyr-1007 and Tyr-1008. Non-receptor tyrosine kinase involved in various processes such as cell growth, development, differentiation or histone modifications. Mediates essential signaling events in both innate and adaptive immunity. In the cytoplasm, plays a pivotal role in signal transduction via its association with type I receptors such as growth hormone (GHR), prolactin (PRLR), leptin (LEPR), erythropoietin (EPOR), thrombopoietin (THPO); or type II receptors including IFN-alpha, IFN-beta, IFN-gamma and multiple interleukins. Following ligand-binding to cell surface receptors, phosphorylates specific tyrosine residues on the cytoplasmic tails of the receptor, creating docking sites for STATs proteins. Subsequently, phosphorylates the STATs proteins once they are recruited to the receptor. Phosphorylated STATs then form homodimer or heterodimers and translocate to the nucleus to activate gene transcription. For example, cell stimulation with erythropoietin (EPO) during erythropoiesis leads to JAK2 autophosphorylation, activation, and its association with erythropoietin receptor (EPOR) that becomes phosphorylated in its cytoplasmic domain. Then, STAT5 (STAT5A or STAT5B) is recruited, phosphorylated and activated by JAK2. Once activated, dimerized STAT5 translocates into the nucleus and promotes the transcription of several essential genes involved in the modulation of erythropoiesis. Part of a signaling cascade that is activated by increased cellular retinol and that leads to the activation of STAT5 (STAT5A or STAT5B). In addition, JAK2 mediates angiotensin-2-induced ARHGEF1 phosphorylation. Plays a role in cell cycle by phosphorylating CDKN1B. Cooperates with TEC through reciprocal phosphorylation to mediate cytokine-driven activation of FOS transcription. In the nucleus, plays a key role in chromatin by specifically mediating phosphorylation of 'Tyr-41' of histone H3 (H3Y41ph), a specific tag that promotes exclusion of CBX5 (HP1 alpha) from chromatin. Up-regulates the potassium voltage-gated channel activity of KCNA3. This Sus scrofa (Pig) protein is Tyrosine-protein kinase JAK2.